The chain runs to 321 residues: Lambda-crystallin homolog (321 aa).

S6 carries the post-translational modification Phosphoserine. NAD(+)-binding positions include 19–20 (LI), D39, E100, and K105.

It belongs to the 3-hydroxyacyl-CoA dehydrogenase family. Homodimer.

The protein resides in the cytoplasm. It carries out the reaction L-gulonate + NAD(+) = 3-dehydro-L-gulonate + NADH + H(+). Inhibited by malonate. Has high L-gulonate 3-dehydrogenase activity. It also exhibits low dehydrogenase activity toward L-3-hydroxybutyrate (HBA) and L-threonate. In Bos taurus (Bovine), this protein is Lambda-crystallin homolog (CRYL1).